The chain runs to 266 residues: Integral membrane protein 2B (266 aa).

Residues M1–C54 are Cytoplasmic-facing. Residues W55–L75 form a helical; Signal-anchor for type II membrane protein membrane-spanning segment. The Lumenal portion of the chain corresponds to Y76–P266. The segment at E102–V134 is necessary for interaction with APP and inhibitor effects on APP processing. The BRICHOS domain maps to F137–L231. Disulfide bonds link C164–C223 and C248–C265. A glycan (N-linked (GlcNAc...) asparagine) is linked at N170.

It belongs to the ITM2 family. Homodimer; disulfide-linked. Interacts with SPPL2A and SPPL2B. Interacts with APP. Mature BRI2 (mBRI2) interacts with the APP amyloid-beta A4 protein; the interaction occurs at the cell surface and in the endocytic compartments and enable alpha- and beta-secretase-induced APP cleavage inhibition. Mature BRI2 (mBRI2) interacts with the APP C99; the interaction occurs in the endocytic compartments and enable gamma-secretase-induced C99 cleavage inhibition. May form heterodimers with Bri23 peptide and APP amyloid-beta protein 40. Interacts with ADAM7 in sperm; the interaction increases following capacitation. The ectodomain C-terminal part of the imBRI2 is processed by furin producing a secreted Bri23 peptide and a mature BRI2, membrane form (mBRI2). The remaining part of the ectodomain of mBRI2 containing the BRICHOS domain is cleaved by ADAM10 and is secreted (BRI2C, soluble form). The membrane-bound N-terminal fragment (BRI2C, membrane form) is further proteolytically processed by SPPL2A and SPPL2B through regulated intramembrane proteolysis producing a secreted C-peptide and a BRI2 intracellular domain (BRI2 ICD) released in the cytosol. Shedding by ADAM10 facilitates intramembrane cleavage but is not absolutely required for BRI2 ICD generation. In terms of processing, glycosylation at Asn-170 is important for cell surface localization, but doesn't affect furin- and ADAM10-induced proteolytic processing.

The protein localises to the golgi apparatus membrane. Its subcellular location is the cell membrane. It localises to the endosome membrane. It is found in the secreted. Plays a regulatory role in the processing of the amyloid-beta A4 precursor protein (APP) and acts as an inhibitor of the amyloid-beta peptide aggregation and fibrils deposition. Plays a role in the induction of neurite outgrowth. Functions as a protease inhibitor by blocking access of secretases to APP cleavage sites. Functionally, mature BRI2 (mBRI2) functions as a modulator of the amyloid-beta A4 precursor protein (APP) processing leading to a strong reduction in the secretion of secretase-processed amyloid-beta protein 40 and amyloid-beta protein 42. In terms of biological role, bri23 peptide prevents aggregation of APP amyloid-beta protein 42 into toxic oligomers. This chain is Integral membrane protein 2B (ITM2B), found in Bos taurus (Bovine).